Reading from the N-terminus, the 543-residue chain is Biotinidase (543 aa).

The first 41 residues, 1-41, serve as a signal peptide directing secretion; sequence MAHAHIQGGRRAKSRFVVCIMSGARSKLALFLCGCYVVALG. Positions 72-351 constitute a CN hydrolase domain; the sequence is NPLALISRQE…VGLIGAENAT (280 aa). The Proton acceptor role is filled by E112. N119 carries an N-linked (GlcNAc...) asparagine glycan. N150 carries N-linked (GlcNAc...) (complex) asparagine glycosylation. N-linked (GlcNAc...) asparagine glycosylation occurs at N203. K212 serves as the catalytic Proton donor. C245 acts as the Nucleophile in catalysis. N-linked (GlcNAc...) asparagine glycosylation is found at N349, N402, and N489.

This sequence belongs to the carbon-nitrogen hydrolase superfamily. BTD/VNN family.

The protein localises to the secreted. It localises to the extracellular space. It carries out the reaction biocytin + H2O = biotin + L-lysine. The enzyme catalyses biotin amide + H2O = biotin + NH4(+). Its function is as follows. Catalytic release of biotin from biocytin, the product of biotin-dependent carboxylases degradation. This chain is Biotinidase, found in Homo sapiens (Human).